The chain runs to 211 residues: DNA/RNA-binding protein ALBA2 (211 aa).

The span at 84–99 (NSGLKKNAKNEDKKSG) shows a compositional bias: basic and acidic residues. Residues 84–121 (NSGLKKNAKNEDKKSGDEEEEEEEEEEDEENNKNKEAN) form a disordered region. Positions 100–113 (DEEEEEEEEEEDEE) are enriched in acidic residues.

The protein belongs to the histone-like Alba family. In terms of assembly, identified in a TARE6-associated complex consisting of over 30 proteins and including ALBA1, ALBA2 and ALBA4; the complex binds to the non-coding subtelomeric repeat region TARE6.

It is found in the nucleus. Its subcellular location is the chromosome. The protein localises to the telomere. The protein resides in the cytoplasm. In terms of biological role, possesses DNA- and RNA-binding activities. Binds to DNA with relaxed sequence specificity. Associates with the subtelomeric TARE6 repeats. This Plasmodium falciparum (isolate 3D7) protein is DNA/RNA-binding protein ALBA2.